The primary structure comprises 121 residues: Large ribosomal subunit protein uL14 (121 aa).

This sequence belongs to the universal ribosomal protein uL14 family. Part of the 50S ribosomal subunit. Forms a cluster with proteins L3 and L19. In the 70S ribosome, L14 and L19 interact and together make contacts with the 16S rRNA in bridges B5 and B8.

Binds to 23S rRNA. Forms part of two intersubunit bridges in the 70S ribosome. This chain is Large ribosomal subunit protein uL14, found in Mycoplasmopsis synoviae (strain 53) (Mycoplasma synoviae).